Consider the following 184-residue polypeptide: Adenine phosphoribosyltransferase (184 aa).

It belongs to the purine/pyrimidine phosphoribosyltransferase family. As to quaternary structure, homodimer.

It localises to the cytoplasm. The enzyme catalyses AMP + diphosphate = 5-phospho-alpha-D-ribose 1-diphosphate + adenine. It participates in purine metabolism; AMP biosynthesis via salvage pathway; AMP from adenine: step 1/1. In terms of biological role, catalyzes a salvage reaction resulting in the formation of AMP, that is energically less costly than de novo synthesis. This Corynebacterium diphtheriae (strain ATCC 700971 / NCTC 13129 / Biotype gravis) protein is Adenine phosphoribosyltransferase.